A 171-amino-acid chain; its full sequence is Ribosome maturation factor RimM (171 aa).

In terms of domain architecture, PRC barrel spans 97–169 (DGEFYYHEII…RVDVSIMEGL (73 aa)).

This sequence belongs to the RimM family. Binds ribosomal protein uS19.

It is found in the cytoplasm. In terms of biological role, an accessory protein needed during the final step in the assembly of 30S ribosomal subunit, possibly for assembly of the head region. Essential for efficient processing of 16S rRNA. May be needed both before and after RbfA during the maturation of 16S rRNA. It has affinity for free ribosomal 30S subunits but not for 70S ribosomes. In Lactococcus lactis subsp. lactis (strain IL1403) (Streptococcus lactis), this protein is Ribosome maturation factor RimM.